The sequence spans 1332 residues: Elongator complex protein 1 (1332 aa).

Phosphoserine occurs at positions 471, 804, 867, 1171, and 1174. Positions 885-1332 are mediates dimerization; sequence VDVNELYDHS…RTQWKLSLLD (448 aa). Positions 1150–1208 are disordered; sequence QAGLDDEVPHGQESDLFSETSSVVSGSEMSGKYSHSNSRISARSSKNRRKAERKKHSLK. Residues 1164 to 1177 show a composition bias toward polar residues; the sequence is DLFSETSSVVSGSE. A required for binding to tRNA region spans residues 1191–1209; sequence ARSSKNRRKAERKKHSLKE. Positions 1194 to 1206 are enriched in basic residues; sequence SKNRRKAERKKHS.

The protein belongs to the ELP1/IKA1 family. In terms of assembly, homodimer; dimerization promotes ELP1 stability and elongator complex formation. Component of the elongator complex which consists of ELP1, ELP2, ELP3, ELP4, ELP5 and ELP6. Interacts preferentially with MAP3K14/NIK followed by IKK-alpha and IKK-beta.

The protein resides in the cytoplasm. It localises to the nucleus. It functions in the pathway tRNA modification; 5-methoxycarbonylmethyl-2-thiouridine-tRNA biosynthesis. Its function is as follows. Component of the elongator complex which is required for multiple tRNA modifications, including mcm5U (5-methoxycarbonylmethyl uridine), mcm5s2U (5-methoxycarbonylmethyl-2-thiouridine), and ncm5U (5-carbamoylmethyl uridine). The elongator complex catalyzes the formation of carboxymethyluridine in the wobble base at position 34 in tRNAs. Regulates the migration and branching of projection neurons in the developing cerebral cortex, through a process depending on alpha-tubulin acetylation. ELP1 binds to tRNA, mediating interaction of the elongator complex with tRNA. May act as a scaffold protein that assembles active IKK-MAP3K14 complexes (IKKA, IKKB and MAP3K14/NIK). The chain is Elongator complex protein 1 from Homo sapiens (Human).